Here is a 262-residue protein sequence, read N- to C-terminus: Abhydrolase domain-containing protein AKT2 (262 aa).

Positions 260 to 262 (SKL) match the Peroxisomal targeting signal type 1 motif.

It belongs to the AB hydrolase superfamily. AKT2 hydrolase family.

Its subcellular location is the peroxisome. Its pathway is mycotoxin biosynthesis. In terms of biological role, abhydrolase domain-containing protein; part of the gene clusters that mediate the biosynthesis of the host-selective toxins (HSTs) AK-toxins responsible for Japanese pear black spot disease by the Japanese pear pathotype. AK-toxins are esters of 9,10-epoxy 8-hydroxy 9-methyldecatrienoic acid (EDA). On cellular level, AK-toxins affect plasma membrane of susceptible cells and cause a sudden increase in loss of K(+) after a few minutes of toxin treatment. The acyl-CoA ligase AKT1, the hydrolase AKT2 and enoyl-CoA hydratase AKT3 are all involved in the biosynthesis of the AK-, AF- and ACT-toxin common 9,10-epoxy-8-hydroxy-9-methyl-decatrienoic acid (EDA) structural moiety. Part of the EDA biosynthesis occurs in the peroxisome since these 3 enzymes are localized in peroxisomes. The exact roles of the 3 enzymes, as well as of additional AK-toxin clusters enzymes, including AKT4, AKT6 and AKTS1, have still to be elucidated. The Cytochrome P450 monooxygenase AKT7 on the other side functions to limit production of EDA and AK-toxin, probably via the catalysis of a side reaction of EDA or its precursor. The protein is Abhydrolase domain-containing protein AKT2 of Alternaria alternata (Alternaria rot fungus).